The primary structure comprises 204 residues: High frequency lysogenization protein HflD homolog (204 aa).

This sequence belongs to the HflD family.

The protein localises to the cytoplasm. It localises to the cell inner membrane. This Shewanella sediminis (strain HAW-EB3) protein is High frequency lysogenization protein HflD homolog.